We begin with the raw amino-acid sequence, 39 residues long: Photosystem I reaction center subunit IX (39 aa).

The chain crosses the membrane as a helical span at residues Phe-7–Ile-27.

This sequence belongs to the PsaJ family.

The protein resides in the cellular thylakoid membrane. Its function is as follows. May help in the organization of the PsaE and PsaF subunits. The chain is Photosystem I reaction center subunit IX from Synechococcus sp. (strain JA-2-3B'a(2-13)) (Cyanobacteria bacterium Yellowstone B-Prime).